The sequence spans 184 residues: Secreted protein B (184 aa).

An N-terminal signal peptide occupies residues 1–19 (MRFILVLVLILGLVSSSFG). The N-linked (GlcNAc...) asparagine glycan is linked to N129. The Cell attachment site motif lies at 164 to 166 (RGD).

This sequence belongs to the Sct family.

The protein localises to the secreted. This chain is Secreted protein B (29C), found in Dictyostelium discoideum (Social amoeba).